The chain runs to 229 residues: Biosynthetic peptidoglycan transglycosylase (229 aa).

A helical transmembrane segment spans residues 14–34 (FITWRFLLVVVLLLLVLLLVL).

Belongs to the glycosyltransferase 51 family.

The protein resides in the cell inner membrane. The enzyme catalyses [GlcNAc-(1-&gt;4)-Mur2Ac(oyl-L-Ala-gamma-D-Glu-L-Lys-D-Ala-D-Ala)](n)-di-trans,octa-cis-undecaprenyl diphosphate + beta-D-GlcNAc-(1-&gt;4)-Mur2Ac(oyl-L-Ala-gamma-D-Glu-L-Lys-D-Ala-D-Ala)-di-trans,octa-cis-undecaprenyl diphosphate = [GlcNAc-(1-&gt;4)-Mur2Ac(oyl-L-Ala-gamma-D-Glu-L-Lys-D-Ala-D-Ala)](n+1)-di-trans,octa-cis-undecaprenyl diphosphate + di-trans,octa-cis-undecaprenyl diphosphate + H(+). It functions in the pathway cell wall biogenesis; peptidoglycan biosynthesis. In terms of biological role, peptidoglycan polymerase that catalyzes glycan chain elongation from lipid-linked precursors. The protein is Biosynthetic peptidoglycan transglycosylase of Shewanella denitrificans (strain OS217 / ATCC BAA-1090 / DSM 15013).